The sequence spans 607 residues: Aspartate--tRNA(Asp/Asn) ligase (607 aa).

E176 is an L-aspartate binding site. The interval 200 to 203 (QQFK) is aspartate. 2 residues coordinate L-aspartate: R222 and H456. 222-224 (RDE) is a binding site for ATP. Residue E496 participates in ATP binding. Residue R503 coordinates L-aspartate. 548–551 (GIDR) is an ATP binding site.

The protein belongs to the class-II aminoacyl-tRNA synthetase family. Type 1 subfamily. Homodimer.

It localises to the cytoplasm. It carries out the reaction tRNA(Asx) + L-aspartate + ATP = L-aspartyl-tRNA(Asx) + AMP + diphosphate. Aspartyl-tRNA synthetase with relaxed tRNA specificity since it is able to aspartylate not only its cognate tRNA(Asp) but also tRNA(Asn). Reaction proceeds in two steps: L-aspartate is first activated by ATP to form Asp-AMP and then transferred to the acceptor end of tRNA(Asp/Asn). This is Aspartate--tRNA(Asp/Asn) ligase from Parvibaculum lavamentivorans (strain DS-1 / DSM 13023 / NCIMB 13966).